The sequence spans 211 residues: Soluble inorganic pyrophosphatase PPA1 (211 aa).

Positions 61 and 75 each coordinate substrate. Tyr-83 (proton donor) is an active-site residue. Residue Tyr-87 participates in substrate binding. Asp-97, Asp-102, and Asp-134 together coordinate Mg(2+). Tyr-171 contacts substrate.

This sequence belongs to the PPase family. Mg(2+) is required as a cofactor.

The protein resides in the cytoplasm. It catalyses the reaction diphosphate + H2O = 2 phosphate + H(+). Its activity is regulated as follows. Strongly inhibited by Ca(2+). Catalyzes the irreversible hydrolysis of pyrophosphate (PPi) to phosphate. The chain is Soluble inorganic pyrophosphatase PPA1 from Solanum tuberosum (Potato).